The sequence spans 120 residues: Large ribosomal subunit protein bL19 (120 aa).

It belongs to the bacterial ribosomal protein bL19 family.

Its function is as follows. This protein is located at the 30S-50S ribosomal subunit interface and may play a role in the structure and function of the aminoacyl-tRNA binding site. The protein is Large ribosomal subunit protein bL19 of Gloeothece citriformis (strain PCC 7424) (Cyanothece sp. (strain PCC 7424)).